Here is a 180-residue protein sequence, read N- to C-terminus: Trafficking protein particle complex subunit 3 (180 aa).

Cys68 is lipidated: S-palmitoyl cysteine.

Belongs to the TRAPP small subunits family. BET3 subfamily. In terms of assembly, homodimer. Component of the multisubunit transport protein particle (TRAPP) complex, which includes at least TRAPPC2, TRAPPC2L, TRAPPC3, TRAPPC3L, TRAPPC4, TRAPPC5, TRAPPC8, TRAPPC9, TRAPPC10, TRAPPC11 and TRAPPC12. Heterodimer with TRAPPC6A. The heterodimer TRAPPC3-TRAPPC6A interacts with TRAPPC2L. Heterodimer with TRAPPC6b. The heterodimer TRAPPC6B-TRAPPC3 interacts with TRAPPC1 likely providing a core for TRAPP complex formation.

Its subcellular location is the golgi apparatus. The protein localises to the cis-Golgi network. It is found in the endoplasmic reticulum. Its function is as follows. May play a role in vesicular transport from endoplasmic reticulum to Golgi. The protein is Trafficking protein particle complex subunit 3 of Homo sapiens (Human).